Here is a 948-residue protein sequence, read N- to C-terminus: Bifunctional glutamine synthetase adenylyltransferase/adenylyl-removing enzyme (948 aa).

The tract at residues 1-444 is adenylyl removase; that stretch reads MSLPSALLPT…VFATLIGEED (444 aa). An adenylyl transferase region spans residues 452-948; sequence ARHFHELWDM…VIQAWQQWLG (497 aa).

Belongs to the GlnE family. Mg(2+) serves as cofactor.

The catalysed reaction is [glutamine synthetase]-O(4)-(5'-adenylyl)-L-tyrosine + phosphate = [glutamine synthetase]-L-tyrosine + ADP. The enzyme catalyses [glutamine synthetase]-L-tyrosine + ATP = [glutamine synthetase]-O(4)-(5'-adenylyl)-L-tyrosine + diphosphate. Its function is as follows. Involved in the regulation of glutamine synthetase GlnA, a key enzyme in the process to assimilate ammonia. When cellular nitrogen levels are high, the C-terminal adenylyl transferase (AT) inactivates GlnA by covalent transfer of an adenylyl group from ATP to specific tyrosine residue of GlnA, thus reducing its activity. Conversely, when nitrogen levels are low, the N-terminal adenylyl removase (AR) activates GlnA by removing the adenylyl group by phosphorolysis, increasing its activity. The regulatory region of GlnE binds the signal transduction protein PII (GlnB) which indicates the nitrogen status of the cell. The polypeptide is Bifunctional glutamine synthetase adenylyltransferase/adenylyl-removing enzyme (Vibrio cholerae serotype O1 (strain ATCC 39315 / El Tor Inaba N16961)).